A 282-amino-acid chain; its full sequence is U1 small nuclear ribonucleoprotein A (282 aa).

RRM domains lie at 10 to 89 (NTIY…YSKT) and 208 to 282 (HILF…FAKK).

The protein belongs to the RRM U1 A/B'' family. U1 snRNP is composed of the 7 core Sm proteins snrpb, snrpd1, snrpd2, snrpd3, snrpe, snrpf and snrpg that assemble in a heptameric protein ring on the Sm site of the small nuclear RNA to form the core snRNP, and at least three U1 snRNP-specific proteins snrnp70/U1-70K, snrpa/U1-A and snrpc/U1-C.

The protein resides in the nucleus. Component of the spliceosomal U1 snRNP, which is essential for recognition of the pre-mRNA 5' splice-site and the subsequent assembly of the spliceosome. U1 snRNP is the first snRNP to interact with pre-mRNA. This interaction is required for the subsequent binding of U2 snRNP and the U4/U6/U5 tri-snRNP. Snrpa binds stem loop II of U1 snRNA. In Xenopus laevis (African clawed frog), this protein is U1 small nuclear ribonucleoprotein A (snrpa).